We begin with the raw amino-acid sequence, 512 residues long: Probable capsid protein 4 (512 aa).

Belongs to the NCLDV major capsid protein family.

Its subcellular location is the virion. This Acanthamoeba polyphaga mimivirus (APMV) protein is Probable capsid protein 4.